The chain runs to 319 residues: G-protein coupled receptor 171 (319 aa).

Residues 1–21 (MTNSSFFCPVYKDLEPFTYFF) lie on the Extracellular side of the membrane. N3 carries an N-linked (GlcNAc...) asparagine glycan. Residues 22–42 (YLVFLVGIIGSCFATWAFIQK) form a helical membrane-spanning segment. Residues 43–48 (NTNHRC) lie on the Cytoplasmic side of the membrane. The helical transmembrane segment at 49–69 (VSIYLINLLTADFLLTLALPV) threads the bilayer. Residues 70–89 (KIVVDLGVAPWKLKIFHCQV) are Extracellular-facing. Residues 90–110 (TACLIYINMYLSIIFLAFVSI) form a helical membrane-spanning segment. The Cytoplasmic segment spans residues 111–132 (DRCLQLTHSCKIYRIQEPGFAK). The helical transmembrane segment at 133-153 (MISTVVWLMVLLIMVPNMMIP) threads the bilayer. At 154-181 (IKDIKEKSNVGCMEFKKEFGRNWHLLTN) the chain is on the extracellular side. The chain crosses the membrane as a helical span at residues 182-202 (FICVAIFLNFSAIILISNCLV). Topologically, residues 203-224 (IRQLYRNKDNENYPNVKKALIN) are cytoplasmic. A helical membrane pass occupies residues 225–245 (ILLVTTGYIICFVPYHIVRIP). Topologically, residues 246 to 268 (YTLSQTEVITDCSTRISLFKAKE) are extracellular. A helical membrane pass occupies residues 269-289 (ATLLLAVSNLCFDPILYYHLS). Topologically, residues 290–319 (KAFRSKVTETFASPKETKAQKEKLRCENNA) are cytoplasmic.

This sequence belongs to the G-protein coupled receptor 1 family. Expressed in both T-cell subsets and natural killer cells, while it is undetectable in B cells or CD14(+) monocytes. Expressed in peripheral blood mononuclear cells (PBMC) and Jurkat cells (at protein level).

The protein localises to the cell membrane. G-protein coupled receptor for Big LEN, a 16-amino acid neuropeptide produced from the precursor protein, proSAAS (encoded by PCSK1N). Acts through a G(i)-alpha-mediated pathway in response to Big LEN. Big LEN-GPR171 system plays an important role in regulating feeding and metabolism. Also plays a role in modulating fear and anxiety-like behaviors in the basolateral amygdala. Big LEN-GPR171 modulates the mu-type opioid receptor signaling and antinociception. Acts as a negative regulator T cell function. The polypeptide is G-protein coupled receptor 171 (Homo sapiens (Human)).